The sequence spans 390 residues: GTPase Obg (390 aa).

Positions 1–159 (MKFVDEASIL…RELLLELMLL (159 aa)) constitute an Obg domain. Positions 127 to 147 (NTRFKSSVNRTPRQKTNGTPG) are disordered. Residues 129–145 (RFKSSVNRTPRQKTNGT) show a composition bias toward polar residues. The region spanning 160–333 (ADVGMLGMPN…LCWDVMTFII (174 aa)) is the OBG-type G domain. GTP contacts are provided by residues 166-173 (GMPNAGKS), 191-195 (FTTLV), 213-216 (DIPG), 283-286 (NKID), and 314-316 (SAA). Mg(2+)-binding residues include Ser-173 and Thr-193.

This sequence belongs to the TRAFAC class OBG-HflX-like GTPase superfamily. OBG GTPase family. Monomer. It depends on Mg(2+) as a cofactor.

The protein localises to the cytoplasm. Its function is as follows. An essential GTPase which binds GTP, GDP and possibly (p)ppGpp with moderate affinity, with high nucleotide exchange rates and a fairly low GTP hydrolysis rate. Plays a role in control of the cell cycle, stress response, ribosome biogenesis and in those bacteria that undergo differentiation, in morphogenesis control. The chain is GTPase Obg from Escherichia coli O157:H7.